A 417-amino-acid chain; its full sequence is Serine protease hepsin (417 aa).

Over 1–23 (MAQKEGGRTVPCCSRPKVAALTA) the chain is Cytoplasmic. Residues 24–44 (GTLLLLTAIGAASWAIVAVLL) form a helical; Signal-anchor for type II membrane protein membrane-spanning segment. At 45-417 (RSDQEPLYPV…SEASGMVTQL (373 aa)) the chain is on the extracellular side. The 98-residue stretch at 54–151 (VQVSSADARL…RGRFLAAICQ (98 aa)) folds into the SRCR domain. Intrachain disulfides connect Cys77–Cys140, Cys90–Cys150, Cys119–Cys138, Cys153–Cys277, Cys188–Cys204, Cys291–Cys359, Cys322–Cys338, and Cys349–Cys381. Asn112 carries N-linked (GlcNAc...) asparagine glycosylation. Residues 163-405 (IVGGRDTSLG…FREWIFQAIK (243 aa)) enclose the Peptidase S1 domain. Residues His203 and Asp257 each act as charge relay system in the active site. The Charge relay system role is filled by Ser353.

This sequence belongs to the peptidase S1 family. Detected in liver and kidney.

The protein localises to the cell membrane. It localises to the apical cell membrane. The enzyme catalyses Cleavage after basic amino-acid residues, with Arg strongly preferred to Lys.. Serine protease that cleaves extracellular substrates, and contributes to the proteolytic processing of growth factors, such as HGF and MST1/HGFL. Plays a role in cell growth and maintenance of cell morphology. Plays a role in the proteolytic processing of ACE2. Mediates the proteolytic cleavage of urinary UMOD that is required for UMOD polymerization. The polypeptide is Serine protease hepsin (HPN) (Homo sapiens (Human)).